A 23-amino-acid polypeptide reads, in one-letter code: Dahlein-4.3 (23 aa).

In terms of tissue distribution, expressed by the skin dorsal glands.

The protein localises to the secreted. In terms of biological role, has no antimicrobial activity. In Ranoidea dahlii (Dahl's aquatic frog), this protein is Dahlein-4.3.